A 302-amino-acid chain; its full sequence is Tyrosine recombinase XerC (302 aa).

One can recognise a Core-binding (CB) domain in the interval 2-89; that stretch reads QPLMEQIRAF…AIRSFYRHLL (88 aa). The 180-residue stretch at 110-289 folds into the Tyr recombinase domain; that stretch reads RLPFHLDIDQ…SLDRLMEVYD (180 aa). Catalysis depends on residues Arg150, Lys174, His241, Arg244, and His267. The active-site O-(3'-phospho-DNA)-tyrosine intermediate is Tyr276.

This sequence belongs to the 'phage' integrase family. XerC subfamily. In terms of assembly, forms a cyclic heterotetrameric complex composed of two molecules of XerC and two molecules of XerD.

The protein resides in the cytoplasm. Site-specific tyrosine recombinase, which acts by catalyzing the cutting and rejoining of the recombining DNA molecules. The XerC-XerD complex is essential to convert dimers of the bacterial chromosome into monomers to permit their segregation at cell division. It also contributes to the segregational stability of plasmids. This Pelobacter propionicus (strain DSM 2379 / NBRC 103807 / OttBd1) protein is Tyrosine recombinase XerC.